The sequence spans 383 residues: Lipid-A-disaccharide synthase (383 aa).

This sequence belongs to the LpxB family.

It carries out the reaction a lipid X + a UDP-2-N,3-O-bis[(3R)-3-hydroxyacyl]-alpha-D-glucosamine = a lipid A disaccharide + UDP + H(+). The protein operates within bacterial outer membrane biogenesis; LPS lipid A biosynthesis. Its function is as follows. Condensation of UDP-2,3-diacylglucosamine and 2,3-diacylglucosamine-1-phosphate to form lipid A disaccharide, a precursor of lipid A, a phosphorylated glycolipid that anchors the lipopolysaccharide to the outer membrane of the cell. This is Lipid-A-disaccharide synthase from Anaeromyxobacter dehalogenans (strain 2CP-C).